The chain runs to 203 residues: MFIVVEGGEGAGKTQFIQALSKRLIEEGREIVTTREPGGCSLGDSVRGLLLDPEQKISPYAELLLFLAARAQHIQEKIIPALKSGKTVISDRFHDSTIVYQGIAGGLGESFVTNLCYHVVGDKPFLPDIIFLLDIPAREGLLRKARQKHLDKFEQKPQIFHQSVREGFLALAEKAPDRYKVLDALLPTEASVDQALLQIRALI.

An ATP-binding site is contributed by Gly-7–Thr-14.

This sequence belongs to the thymidylate kinase family.

The enzyme catalyses dTMP + ATP = dTDP + ADP. In terms of biological role, phosphorylation of dTMP to form dTDP in both de novo and salvage pathways of dTTP synthesis. The polypeptide is Thymidylate kinase (Chlamydia trachomatis serovar L2 (strain ATCC VR-902B / DSM 19102 / 434/Bu)).